The following is a 235-amino-acid chain: Ubiquitin-conjugating enzyme E2 R1 (235 aa).

The UBC core domain occupies 8–174 (SSQKALLLEL…IRKQVLGTKV (167 aa)). The Glycyl thioester intermediate role is filled by Cys-93. The tract at residues 98–113 (HPPVDDPQSGELPSER) is important for ubiquitin transfer. Residues 190–235 (YCVKTKAPAPDEGSDLFYDDYYEDGEVEEADSCFGDEEDDSGTEES) are SCF-binding. A phosphoserine; by CK2 mark is found at Ser-203, Ser-221, and Ser-230. Thr-232 carries the phosphothreonine; by CK2 modification. Residue Ser-235 is modified to Phosphoserine; by CK2.

Belongs to the ubiquitin-conjugating enzyme family. As to quaternary structure, interacts with multiple Cul1-RING E3 ubiquitin-protein ligase complexes, also known as SCF (SKP1-CUL1-F-box protein) complexes. Identified in a SCF (SKP1-CUL1-F-box protein) E3 ubiquitin ligase complex together with HINT1 and RBX1. When cullin is neddylated, the interaction between the E2 and the SCF complex is strengthened. Interacts with multiple Cul2-RING (CRL2) E3 ubiquitin-protein ligase complexes, also known as ECS (Elongin BC-CUL2/5-SOCS-box protein) complexes. When phosphorylated, interacts with beta-TrCP (BTRC). Interacts with casein kinase subunit CSNK2B. Interacts with CNTD1; this interaction regulates the cell-cycle progression. Phosphorylated by CK2. Phosphorylation of the C-terminal tail by CK2 controls the nuclear localization.

It is found in the cytoplasm. It localises to the nucleus. The enzyme catalyses S-ubiquitinyl-[E1 ubiquitin-activating enzyme]-L-cysteine + [E2 ubiquitin-conjugating enzyme]-L-cysteine = [E1 ubiquitin-activating enzyme]-L-cysteine + S-ubiquitinyl-[E2 ubiquitin-conjugating enzyme]-L-cysteine.. It catalyses the reaction S-ubiquitinyl-[E1 ubiquitin-activating enzyme]-L-cysteine + [acceptor protein]-L-lysine = [E1 ubiquitin-activating enzyme]-L-cysteine + N(6)-monoubiquitinyl-[acceptor protein]-L-lysine.. The protein operates within protein modification; protein ubiquitination. CDC34-catalyzed polyubiquitin chain assembly activity is stimulated by the conjugation of NEDD8 to the CUL1 SCF E3 ligase complex subunit. In terms of biological role, E2 ubiquitin-conjugating enzyme that accepts ubiquitin from an E1 ubiquitin-activating protein, and catalyzes its covalent attachment to other proteins by an E3 ubiquitin-protein ligase complex. In vitro catalyzes 'Lys-48'-linked polyubiquitination. Cooperates with the E2 UBCH5C and the SCF(FBXW11) E3 ligase complex for the polyubiquitination of NFKBIA leading to its subsequent proteasomal degradation. Performs ubiquitin chain elongation building ubiquitin chains from the UBE2D3-primed NFKBIA-linked ubiquitin. UBE2D3 acts as an initiator E2, priming the phosphorylated NFKBIA target at positions 'Lys-21' and/or 'Lys-22' with a monoubiquitin. Cooperates with the SCF(SKP2) E3 ligase complex to regulate cell proliferation through ubiquitination and degradation of MYBL2 and KIP1. Involved in ubiquitin conjugation and degradation of CREM isoform ICERIIgamma and ATF15 resulting in abrogation of ICERIIgamma- and ATF5-mediated repression of cAMP-induced transcription during both meiotic and mitotic cell cycles. Involved in the regulation of the cell cycle G2/M phase through its targeting of the WEE1 kinase for ubiquitination and degradation. Also involved in the degradation of beta-catenin. The sequence is that of Ubiquitin-conjugating enzyme E2 R1 (Cdc34) from Mus musculus (Mouse).